The sequence spans 554 residues: Formate--tetrahydrofolate ligase (554 aa).

63 to 70 (TPAGEGKT) serves as a coordination point for ATP.

This sequence belongs to the formate--tetrahydrofolate ligase family.

It catalyses the reaction (6S)-5,6,7,8-tetrahydrofolate + formate + ATP = (6R)-10-formyltetrahydrofolate + ADP + phosphate. It functions in the pathway one-carbon metabolism; tetrahydrofolate interconversion. The chain is Formate--tetrahydrofolate ligase from Halothermothrix orenii (strain H 168 / OCM 544 / DSM 9562).